A 480-amino-acid chain; its full sequence is Glutamate--tRNA ligase (480 aa).

Residues 21–31 (PSPTGYLHVGG) carry the 'HIGH' region motif. The Zn(2+) site is built by Cys110, Cys112, Cys137, and His139. Positions 248-252 (KLSKR) match the 'KMSKS' region motif. Residue Lys251 coordinates ATP.

Belongs to the class-I aminoacyl-tRNA synthetase family. Glutamate--tRNA ligase type 1 subfamily. Monomer. The cofactor is Zn(2+).

Its subcellular location is the cytoplasm. The catalysed reaction is tRNA(Glu) + L-glutamate + ATP = L-glutamyl-tRNA(Glu) + AMP + diphosphate. Its function is as follows. Catalyzes the attachment of glutamate to tRNA(Glu) in a two-step reaction: glutamate is first activated by ATP to form Glu-AMP and then transferred to the acceptor end of tRNA(Glu). The protein is Glutamate--tRNA ligase of Mannheimia succiniciproducens (strain KCTC 0769BP / MBEL55E).